The chain runs to 139 residues: ATP synthase epsilon chain (139 aa).

Belongs to the ATPase epsilon chain family. As to quaternary structure, F-type ATPases have 2 components, CF(1) - the catalytic core - and CF(0) - the membrane proton channel. CF(1) has five subunits: alpha(3), beta(3), gamma(1), delta(1), epsilon(1). CF(0) has three main subunits: a, b and c.

It localises to the cell inner membrane. Produces ATP from ADP in the presence of a proton gradient across the membrane. This is ATP synthase epsilon chain from Pseudomonas syringae pv. tomato (strain ATCC BAA-871 / DC3000).